We begin with the raw amino-acid sequence, 869 residues long: Leucine--tRNA ligase (869 aa).

The short motif at 42 to 52 (PYPSGRLHMGH) is the 'HIGH' region element. Residues 620–624 (KMSKS) carry the 'KMSKS' region motif. ATP is bound at residue Lys-623.

The protein belongs to the class-I aminoacyl-tRNA synthetase family.

It is found in the cytoplasm. The catalysed reaction is tRNA(Leu) + L-leucine + ATP = L-leucyl-tRNA(Leu) + AMP + diphosphate. The protein is Leucine--tRNA ligase of Hamiltonella defensa subsp. Acyrthosiphon pisum (strain 5AT).